Reading from the N-terminus, the 68-residue chain is Large ribosomal subunit protein uL29 (68 aa).

This sequence belongs to the universal ribosomal protein uL29 family.

The sequence is that of Large ribosomal subunit protein uL29 from Parvibaculum lavamentivorans (strain DS-1 / DSM 13023 / NCIMB 13966).